An 822-amino-acid chain; its full sequence is uncharacterized protein (822 aa).

The Cytoplasmic portion of the chain corresponds to 1–13; sequence MCHNSVRSGNKAG. Residues 14 to 34 traverse the membrane as a helical segment; the sequence is FLGIKFGSALLSIATGAIAIA. At 35 to 44 the chain is on the extracellular side; the sequence is LLCKFHDHEA. Residues 45-65 form a helical membrane-spanning segment; the sequence is VLIVIVCSTLLYGIPSLISFI. The Cytoplasmic segment spans residues 66 to 76; the sequence is TETVFAPSKFH. The chain crosses the membrane as a helical span at residues 77 to 97; it reads IGYFYNVLNFALPLITMGCTV. The Extracellular portion of the chain corresponds to 98-120; that stretch reads DYFHNTLRSPISVQSESHRVYIT. The helical transmembrane segment at 121-141 threads the bilayer; that stretch reads TLDSLLIFTLFINGIQLGFFL. Over 142-822 the chain is Cytoplasmic; that stretch reads KDGNANNFGS…PVEELVSPSK (681 aa). Residues 271-290 form a disordered region; that stretch reads RNTQQATKVPTEKKSNHRSS. The residue at position 690 (S690) is a Phosphoserine. Over residues 698–712 the composition is skewed to polar residues; sequence TLQSSHSPTKSTSGN. 2 disordered regions span residues 698–728 and 751–783; these read TLQS…STVN and NGEE…GYPE. The span at 761–776 shows a compositional bias: low complexity; that stretch reads QSIQSSSSGSEQESAG.

The protein resides in the membrane. This is an uncharacterized protein from Saccharomyces cerevisiae (strain ATCC 204508 / S288c) (Baker's yeast).